The sequence spans 374 residues: Ribosomal RNA large subunit methyltransferase G (374 aa).

The protein belongs to the methyltransferase superfamily. RlmG family.

The protein resides in the cytoplasm. It carries out the reaction guanosine(1835) in 23S rRNA + S-adenosyl-L-methionine = N(2)-methylguanosine(1835) in 23S rRNA + S-adenosyl-L-homocysteine + H(+). Specifically methylates the guanine in position 1835 (m2G1835) of 23S rRNA. This is Ribosomal RNA large subunit methyltransferase G from Ectopseudomonas mendocina (strain ymp) (Pseudomonas mendocina).